Reading from the N-terminus, the 306-residue chain is MSGAFYVFTALLLVASDQIAAESGKRLEMYKHDVMAASNAVVKSLPNRFLRGSRDEPDNLANEERTVYSVLASMINEGVSKMPCAAEVVEKISHTTEAVENMPRAAKAVKKRPRGAKAGRKMPRAAEAEAVKKVPRAGTAVKKAPPLAEDVKEMPRAKEAMEELRRAADATEDMQRAKANDLLKALIGADEALKKHWTPSGNTAAIGDTSYDVFNKVILSLPEWKINFRGMKSMAVLDQHRENIDLVHKTFEILCDKNVKPTAAEVSFIWSMMEWKGPNPEKYHRRNLVRQAQRYVFLDLRNVKKR.

Residues 1–21 (MSGAFYVFTALLLVASDQIAA) form the signal peptide. A RxLR-dEER motif is present at residues 48–65 (RFLRGSRDEPDNLANEER). The tract at residues 105–142 (AAKAVKKRPRGAKAGRKMPRAAEAEAVKKVPRAGTAVK) is disordered. Residues 107-123 (KAVKKRPRGAKAGRKMP) are compositionally biased toward basic residues.

The protein belongs to the RxLR effector family.

The protein resides in the secreted. The protein localises to the host nucleus. Its function is as follows. Secreted effector that partially suppresses the host cell death induced by cell death-inducing proteins. In Plasmopara viticola (Downy mildew of grapevine), this protein is Secreted RxLR effector protein 76.